Consider the following 269-residue polypeptide: MFSDKMILIAGPCVIEEEETTLEIASKIQEIVAPYTDHIHWIFKSSYDKANRSSINSYRGPGLQEGLRILSKVKQTFGVEILTDVHSPEEARAAAEVCDILQIPAFLCRQTDLLVAAAETHAVINIKKGQFLSPWDMQGPVDKVLSTGNSKIILTERGCSFGYNNLVSDMRSIAVLSKMGFPVVFDGTHSVQLPGGLKTHSGGQTEFIPTLTRAALAAGAHGLFIETHMNPAIAKSDAASMLSLKTFEALLPIWNQLYQCVRSFEMAAV.

It belongs to the KdsA family.

It is found in the cytoplasm. The catalysed reaction is D-arabinose 5-phosphate + phosphoenolpyruvate + H2O = 3-deoxy-alpha-D-manno-2-octulosonate-8-phosphate + phosphate. The protein operates within carbohydrate biosynthesis; 3-deoxy-D-manno-octulosonate biosynthesis; 3-deoxy-D-manno-octulosonate from D-ribulose 5-phosphate: step 2/3. It participates in bacterial outer membrane biogenesis; lipopolysaccharide biosynthesis. The chain is 2-dehydro-3-deoxyphosphooctonate aldolase (kdsA) from Chlamydophila psittaci (strain ATCC VR-125 / 6BC) (Chlamydia psittaci).